The following is a 225-amino-acid chain: J-type co-chaperone jac1, mitochondrial (225 aa).

The N-terminal 49 residues, M1–H49, are a transit peptide targeting the mitochondrion. The J domain occupies N61–L137. The HSP70 binding signature appears at H98 to D100.

The protein belongs to the HscB family. Interacts with ssc1.

It is found in the mitochondrion matrix. Functionally, co-chaperone required for the assembly of iron-sulfur (Fe/S) clusters in mitochondria. Stimulates the ATPase activity of the mitochondrial Hsp70 chaperone ssc1, to mediate the transfer of iron-sulfur clusters from isu1 to grx5. In Schizosaccharomyces pombe (strain 972 / ATCC 24843) (Fission yeast), this protein is J-type co-chaperone jac1, mitochondrial.